Consider the following 563-residue polypeptide: Endogenous retroviral envelope protein HEMO (563 aa).

The signal sequence occupies residues 1–26 (MGSLSNYALLQLTLTAFLTILVQPQH). At 27-488 (LLAPVFRTLS…IFAKVGDWFR (462 aa)) the chain is on the extracellular side. N122 and N192 each carry an N-linked (GlcNAc...) asparagine glycan. The chain crosses the membrane as a helical span at residues 489 to 509 (SWGYVLLIVLFCLFIFVLIYV). Over 510 to 563 (RVFRKSRRSLNSQPLNLALSPQQSAQLLVSETSCQVSNRAMKGLTTHQYDTSLL) the chain is Cytoplasmic.

It belongs to the gamma type-C retroviral envelope protein family. Post-translationally, N-glycosylated. Cleaved by some metalloproteinase at 432-Gln-Arg-433 (mainly) or 433-Arg-Gln-434, leading to release the secreted form (Endogenous retroviral envelope protein HEMO, secreted form) in the extracellular medium. In terms of tissue distribution, expressed at high level in the placenta and stem cells (at protein level). Also expressed in the kidney but at a lower level. Endogenous retroviral envelope protein HEMO, secreted form: Present in the blood of pregnant women (at protein level).

The protein resides in the cell membrane. It is found in the secreted. Its function is as follows. Endogenous envelope proteins originate from retroviral envelope proteins, which mediate receptor recognition and membrane fusion during early infection. Endogenous envelope proteins may have kept, lost or modified their original function during evolution. The polypeptide is Endogenous retroviral envelope protein HEMO (Homo sapiens (Human)).